Reading from the N-terminus, the 399-residue chain is Ectoine hydrolase (399 aa).

It belongs to the peptidase M24 family.

It is found in the cytoplasm. The enzyme catalyses L-ectoine + H2O = (2S)-2-acetamido-4-aminobutanoate. Involved in the degradation of ectoine, which allows H.elongata to utilize ectoine as both a carbon and a nitrogen source for growth. Catalyzes the hydrolysis of ectoine to N-acetyl-L-2,4-diaminobutyric acid (N-Ac-DABA). It can produce both isoforms N-gamma-acetyl-L-2,4-diaminobutyric acid (N-gamma-Ac-DABA) and N-alpha-acetyl-L-2,4-diaminobutyric acid (-Nalpha-Ac-DABA), however N-alpha-Ac-DABA is the essential substrate for the subsequent catabolic enzyme DoeB. This is Ectoine hydrolase from Halomonas elongata (strain ATCC 33173 / DSM 2581 / NBRC 15536 / NCIMB 2198 / 1H9).